A 363-amino-acid chain; its full sequence is Hydroxycarboxylic acid receptor 2 (363 aa).

Over 1-33 the chain is Extracellular; it reads MNRHHLQDHFLEIDKKNCCVFRDDFIVKVLPPV. Residues 34–54 form a helical membrane-spanning segment; sequence LGLEFIFGLLGNGLALWIFCF. The Cytoplasmic portion of the chain corresponds to 55-63; that stretch reads HLKSWKSSR. Residues 64–84 form a helical membrane-spanning segment; that stretch reads IFLFNLAVADFLLIICLPFLM. The Extracellular segment spans residues 85–102; it reads DNYVRRWDWKFGDIPCRL. The cysteines at positions 100 and 177 are disulfide-linked. Residues 103–123 traverse the membrane as a helical segment; the sequence is MLFMLAMNRQGSIIFLTVVAV. Residues 124–142 are Cytoplasmic-facing; that stretch reads DRYFRVVHPHHALNKISNR. The helical transmembrane segment at 143-163 threads the bilayer; it reads TAAIISCLLWGITIGLTVHLL. The Extracellular segment spans residues 164–192; that stretch reads KKKMPIQNGGANLCSSFSICHTFQWHEAM. A helical transmembrane segment spans residues 193-213; sequence FLLEFFLPLGIILFCSARIIW. The Cytoplasmic portion of the chain corresponds to 214–229; that stretch reads SLRQRQMDRHAKIKRA. A helical membrane pass occupies residues 230–250; sequence ITFIMVVAIVFVICFLPSVVV. The Extracellular segment spans residues 251-273; that stretch reads RIRIFWLLHTSGTQNCEVYRSVD. The helical transmembrane segment at 274–294 threads the bilayer; the sequence is LAFFITLSFTYMNSMLDPVVY. Topologically, residues 295–363 are cytoplasmic; the sequence is YFSSPSFPNF…SPSYLGPTSP (69 aa). Positions 319 to 363 are disordered; the sequence is GEPDNNRSTSVELTGDPNKTRGAPEALMANSGEPWSPSYLGPTSP. A Phosphoserine modification is found at serine 328.

Belongs to the G-protein coupled receptor 1 family. In terms of tissue distribution, expression largely restricted to adipose tissue and spleen. Expressed on mature neutrophils but not on immature neutrophils or eosinophils.

It is found in the cell membrane. Acts as a high affinity receptor for both nicotinic acid (also known as niacin) and (D)-beta-hydroxybutyrate and mediates increased adiponectin secretion and decreased lipolysis through G(i)-protein-mediated inhibition of adenylyl cyclase. This pharmacological effect requires nicotinic acid doses that are much higher than those provided by a normal diet. Mediates nicotinic acid-induced apoptosis in mature neutrophils. Receptor activation by nicotinic acid results in reduced cAMP levels which may affect activity of cAMP-dependent protein kinase A and phosphorylation of target proteins, leading to neutrophil apoptosis. The rank order of potency for the displacement of nicotinic acid binding is 5-methyl pyrazole-3-carboxylic acid = pyridine-3-acetic acid &gt; acifran &gt; 5-methyl nicotinic acid = acipimox &gt;&gt; nicotinuric acid = nicotinamide. The chain is Hydroxycarboxylic acid receptor 2 (HCAR2) from Homo sapiens (Human).